Consider the following 582-residue polypeptide: DNA mismatch repair protein MutL (582 aa).

The protein belongs to the DNA mismatch repair MutL/HexB family.

Its function is as follows. This protein is involved in the repair of mismatches in DNA. It is required for dam-dependent methyl-directed DNA mismatch repair. May act as a 'molecular matchmaker', a protein that promotes the formation of a stable complex between two or more DNA-binding proteins in an ATP-dependent manner without itself being part of a final effector complex. This Acidiphilium cryptum (strain JF-5) protein is DNA mismatch repair protein MutL.